Consider the following 597-residue polypeptide: Elongation factor 4 (597 aa).

In terms of domain architecture, tr-type G spans 2-184 (KNIRNFSIIA…EIVAKIPAPT (183 aa)). GTP-binding positions include 14–19 (DHGKST) and 131–134 (NKID).

It belongs to the TRAFAC class translation factor GTPase superfamily. Classic translation factor GTPase family. LepA subfamily.

The protein resides in the cell inner membrane. It catalyses the reaction GTP + H2O = GDP + phosphate + H(+). In terms of biological role, required for accurate and efficient protein synthesis under certain stress conditions. May act as a fidelity factor of the translation reaction, by catalyzing a one-codon backward translocation of tRNAs on improperly translocated ribosomes. Back-translocation proceeds from a post-translocation (POST) complex to a pre-translocation (PRE) complex, thus giving elongation factor G a second chance to translocate the tRNAs correctly. Binds to ribosomes in a GTP-dependent manner. The sequence is that of Elongation factor 4 from Neisseria meningitidis serogroup C / serotype 2a (strain ATCC 700532 / DSM 15464 / FAM18).